The following is a 270-amino-acid chain: Hemin import ATP-binding protein HmuV (270 aa).

The ABC transporter domain occupies 2–238; it reads LTVENIEVTL…VTLSQAYGCT (237 aa). Residue 34-41 participates in ATP binding; sequence GHNGSGKT.

This sequence belongs to the ABC transporter superfamily. Heme (hemin) importer (TC 3.A.1.14.5) family. The complex is composed of two ATP-binding proteins (HmuV), two transmembrane proteins (HmuU) and a solute-binding protein (HmuT).

The protein localises to the cell inner membrane. Functionally, part of the ABC transporter complex HmuTUV involved in hemin import. Responsible for energy coupling to the transport system. In Jannaschia sp. (strain CCS1), this protein is Hemin import ATP-binding protein HmuV.